An 838-amino-acid polypeptide reads, in one-letter code: Protein P (838 aa).

Positions 1–177 (MPLSYQHFRK…FCGSPYSWEQ (177 aa)) are terminal protein domain (TP). The spacer stretch occupies residues 178–341 (ELQHQTSTRH…YCLTHIVNLL (164 aa)). Disordered regions lie at residues 215–238 (QSRLGLQPQQGSMARGKSGRSGSI) and 285–311 (STSKRQSSSGHAVEFHNIPPSSARSQS). Residues 285 to 294 (STSKRQSSSG) are compositionally biased toward polar residues. The tract at residues 342-685 (EDWGPCTEHG…YLHLYPVARQ (344 aa)) is polymerase/reverse transcriptase domain (RT). Residues 352-595 (EHNIRIPRTP…YSLNFMGYVI (244 aa)) enclose the Reverse transcriptase domain. The Mg(2+) site is built by Asp424, Asp546, and Asp547.

It belongs to the hepadnaviridae P protein family.

It carries out the reaction DNA(n) + a 2'-deoxyribonucleoside 5'-triphosphate = DNA(n+1) + diphosphate. It catalyses the reaction Endonucleolytic cleavage to 5'-phosphomonoester.. Its activity is regulated as follows. Activated by host HSP70 and HSP40 in vitro to be able to bind the epsilon loop of the pgRNA. Because deletion of the RNase H region renders the protein partly chaperone-independent, the chaperones may be needed indirectly to relieve occlusion of the RNA-binding site by this domain. Inhibited by several reverse-transcriptase inhibitors: Lamivudine, Adefovir and Entecavir. Functionally, multifunctional enzyme that converts the viral RNA genome into dsDNA in viral cytoplasmic capsids. This enzyme displays a DNA polymerase activity that can copy either DNA or RNA templates, and a ribonuclease H (RNase H) activity that cleaves the RNA strand of RNA-DNA heteroduplexes in a partially processive 3'- to 5'-endonucleasic mode. Neo-synthesized pregenomic RNA (pgRNA) are encapsidated together with the P protein, and reverse-transcribed inside the nucleocapsid. Initiation of reverse-transcription occurs first by binding the epsilon loop on the pgRNA genome, and is initiated by protein priming, thereby the 5'-end of (-)DNA is covalently linked to P protein. Partial (+)DNA is synthesized from the (-)DNA template and generates the relaxed circular DNA (RC-DNA) genome. After budding and infection, the RC-DNA migrates in the nucleus, and is converted into a plasmid-like covalently closed circular DNA (cccDNA). The activity of P protein does not seem to be necessary for cccDNA generation, and is presumably released from (+)DNA by host nuclear DNA repair machinery. The chain is Protein P from Homo sapiens (Human).